Here is a 355-residue protein sequence, read N- to C-terminus: MSANQSPAGQPPTATYDSAFLKACRREPVPHTPVWFMRQAGRSLPEYLKVREGIPMLESCMRPELVAEITLQPVRRHGVDAAVYFSDIVVPLKAIGIDLDIKPGVGPVIAEPIRTRADLARLRDLTPEDVAYVTEAFGLLTRELGATPLIGFAGAPFTLASYLVEGGPSRNHEHTKALMYGDPQLWADLLDRLAGITAAFLKVQIEAGASAVQLFDSWVGALSPADYRRSVLPASRKVFEAVSGYGVPRIHFGVGTGELLGLLGEAGADVVGVDWRVPLDEAARRVGPGKALQGNLDPAVLFAGREAVETKTREVLDAATGLEGHVFNLGHGVLPTTDPDALTRLVEYVHTQTTR.

Residues 38–42 (RQAGR), Asp87, Tyr162, Ser217, and His331 each bind substrate.

The protein belongs to the uroporphyrinogen decarboxylase family. As to quaternary structure, homodimer.

It localises to the cytoplasm. The enzyme catalyses uroporphyrinogen III + 4 H(+) = coproporphyrinogen III + 4 CO2. It functions in the pathway porphyrin-containing compound metabolism; protoporphyrin-IX biosynthesis; coproporphyrinogen-III from 5-aminolevulinate: step 4/4. Functionally, catalyzes the decarboxylation of four acetate groups of uroporphyrinogen-III to yield coproporphyrinogen-III. This is Uroporphyrinogen decarboxylase from Streptomyces coelicolor (strain ATCC BAA-471 / A3(2) / M145).